Here is a 483-residue protein sequence, read N- to C-terminus: Glutamyl-tRNA(Gln) amidotransferase subunit A (483 aa).

Active-site charge relay system residues include Lys-77 and Ser-152. The active-site Acyl-ester intermediate is the Ser-176.

Belongs to the amidase family. GatA subfamily. Heterotrimer of A, B and C subunits.

It carries out the reaction L-glutamyl-tRNA(Gln) + L-glutamine + ATP + H2O = L-glutaminyl-tRNA(Gln) + L-glutamate + ADP + phosphate + H(+). Functionally, allows the formation of correctly charged Gln-tRNA(Gln) through the transamidation of misacylated Glu-tRNA(Gln) in organisms which lack glutaminyl-tRNA synthetase. The reaction takes place in the presence of glutamine and ATP through an activated gamma-phospho-Glu-tRNA(Gln). In Listeria innocua serovar 6a (strain ATCC BAA-680 / CLIP 11262), this protein is Glutamyl-tRNA(Gln) amidotransferase subunit A.